The chain runs to 431 residues: Pachytene checkpoint protein 2 homolog (431 aa).

Methionine 1 is subject to N-acetylmethionine. 179 to 186 (GPPGTGKT) contacts ATP.

The protein belongs to the AAA ATPase family. PCH2 subfamily. In terms of assembly, specifically interacts with the ligand binding domain of the thyroid receptor (TR). This interaction does not require the presence of thyroid hormone for its interaction. Interacts with proteasome subunit PSMA8; to participate in meiosis progression during spermatogenesis.

Its function is as follows. Plays a key role in chromosome recombination and chromosome structure development during meiosis. Required at early steps in meiotic recombination that leads to non-crossovers pathways. Also needed for efficient completion of homologous synapsis by influencing crossover distribution along the chromosomes affecting both crossovers and non-crossovers pathways. Also required for development of higher-order chromosome structures and is needed for synaptonemal-complex formation. In males, required for efficient synapsis of the sex chromosomes and for sex body formation. Promotes early steps of the DNA double-strand breaks (DSBs) repair process upstream of the assembly of RAD51 complexes. Required for depletion of HORMAD1 and HORMAD2 from synapsed chromosomes. Plays a role in mitotic spindle assembly checkpoint (SAC) activation. In Sus scrofa (Pig), this protein is Pachytene checkpoint protein 2 homolog (TRIP13).